We begin with the raw amino-acid sequence, 329 residues long: MLAALNAPFPWTRRHVLSLEDFSAAEYALVLQTAGSFQQVLARRNRKVPTLQGRIIVNLFFESSTRTRTSFELAAKALSADVVNFSAATSSLTKGETIFDTTRTFLAMGMDIVVVRHRDSGVPHAVARDLEQLGSPVSVINAGDGQHEHPTQALLDLFTLCTLLDAYDPRPELLAGKKIVIVGDILHSRVARSNLCSLVTCGGEVHLAGPPTLLPGEFRQYGATLHHHLAPALEGADFVMTLRLQKERMGDYLLPSLREYHRLYGITRERLALCSPGVRLLHPGPVNRGVELSSDLLDDPRLSLVSQQVTSGVAVRMALLYLLAGGKAA.

2 residues coordinate carbamoyl phosphate: Arg-66 and Thr-67. Residue Lys-94 coordinates L-aspartate. 3 residues coordinate carbamoyl phosphate: Arg-116, His-149, and Gln-152. 2 residues coordinate L-aspartate: Arg-189 and Arg-243. The carbamoyl phosphate site is built by Gly-284 and Pro-285.

This sequence belongs to the aspartate/ornithine carbamoyltransferase superfamily. ATCase family. As to quaternary structure, heterododecamer (2C3:3R2) of six catalytic PyrB chains organized as two trimers (C3), and six regulatory PyrI chains organized as three dimers (R2).

It catalyses the reaction carbamoyl phosphate + L-aspartate = N-carbamoyl-L-aspartate + phosphate + H(+). Its pathway is pyrimidine metabolism; UMP biosynthesis via de novo pathway; (S)-dihydroorotate from bicarbonate: step 2/3. Catalyzes the condensation of carbamoyl phosphate and aspartate to form carbamoyl aspartate and inorganic phosphate, the committed step in the de novo pyrimidine nucleotide biosynthesis pathway. This is Aspartate carbamoyltransferase catalytic subunit from Gloeobacter violaceus (strain ATCC 29082 / PCC 7421).